The primary structure comprises 397 residues: 42.8 kDa protein in whiE locus (397 aa).

Positions Met1 to Thr22 are disordered. A compositionally biased stretch (low complexity) spans Ala8–Thr22. An ABM domain is found at Val46–Leu137.

Belongs to the SchA/CurD family.

This Streptomyces coelicolor (strain ATCC BAA-471 / A3(2) / M145) protein is 42.8 kDa protein in whiE locus.